Consider the following 431-residue polypeptide: Dihydroorotase (431 aa).

The Zn(2+) site is built by H59 and H61. Substrate is bound by residues 61-63 (HLR) and N93. Positions 151, 178, 231, and 304 each coordinate Zn(2+). D304 is an active-site residue. Substrate-binding positions include H308 and 322 to 323 (FG).

It belongs to the metallo-dependent hydrolases superfamily. DHOase family. Class I DHOase subfamily. Zn(2+) is required as a cofactor.

It catalyses the reaction (S)-dihydroorotate + H2O = N-carbamoyl-L-aspartate + H(+). The protein operates within pyrimidine metabolism; UMP biosynthesis via de novo pathway; (S)-dihydroorotate from bicarbonate: step 3/3. Functionally, catalyzes the reversible cyclization of carbamoyl aspartate to dihydroorotate. This Caldanaerobacter subterraneus subsp. tengcongensis (strain DSM 15242 / JCM 11007 / NBRC 100824 / MB4) (Thermoanaerobacter tengcongensis) protein is Dihydroorotase.